The sequence spans 780 residues: ATP-dependent 6-phosphofructokinase, muscle type (780 aa).

Thr-2 bears the N-acetylthreonine mark. Positions 2–390 (THEEHHAAKT…NWEVYKLLAH (389 aa)) are N-terminal catalytic PFK domain 1. Residues Gly-25, 88-89 (RC), and 118-121 (GDGS) each bind ATP. Asp-119 is a binding site for Mg(2+). Phosphoserine is present on Ser-133. Substrate-binding positions include 164 to 166 (SID), Arg-201, 208 to 210 (MGR), Glu-264, Arg-292, and 298 to 301 (HVQR). The active-site Proton acceptor is Asp-166. Ser-377 is modified (phosphoserine). The segment at 391–401 (VRPPVSKSGSH) is interdomain linker. Residues 402–780 (TVAVMNVGAP…TRKRSGEAAV (379 aa)) form a C-terminal regulatory PFK domain 2 region. Residues Arg-471 and 528-532 (TVSNN) each bind beta-D-fructose 2,6-bisphosphate. A glycan (O-linked (GlcNAc) serine) is linked at Ser-530. Residue Lys-557 is modified to N6-(2-hydroxyisobutyryl)lysine. Beta-D-fructose 2,6-bisphosphate-binding positions include Arg-566, 573 to 575 (MGG), Glu-629, Arg-655, and 661 to 664 (HMQQ). Ser-667 bears the Phosphoserine mark. Arg-735 contributes to the beta-D-fructose 2,6-bisphosphate binding site. Ser-775 bears the Phosphoserine mark.

Belongs to the phosphofructokinase type A (PFKA) family. ATP-dependent PFK group I subfamily. Eukaryotic two domain clade 'E' sub-subfamily. In terms of assembly, homo- and heterotetramers. Phosphofructokinase (PFK) enzyme functions as a tetramer composed of different combinations of 3 types of subunits, called PFKM (where M stands for Muscle), PFKL (Liver) and PFKP (Platelet). The composition of the PFK tetramer differs according to the tissue type it is present in. In muscles, it is composed of 4 PFKM subunits (also called M4). In the liver, the predominant form is a tetramer of PFKL subunits (L4). In erythrocytes, both PFKM and PFKL subunits randomly tetramerize to form M4, L4 and other combinations (ML3, M2L2, M3L). The kinetic and regulatory properties of the tetrameric enzyme are dependent on the subunit composition, hence can vary across tissues. Interacts (via C-terminus) with HK1 (via N-terminal spermatogenic cell-specific region). Mg(2+) serves as cofactor. In terms of processing, glcNAcylation decreases enzyme activity.

Its subcellular location is the cytoplasm. It catalyses the reaction beta-D-fructose 6-phosphate + ATP = beta-D-fructose 1,6-bisphosphate + ADP + H(+). The protein operates within carbohydrate degradation; glycolysis; D-glyceraldehyde 3-phosphate and glycerone phosphate from D-glucose: step 3/4. Its activity is regulated as follows. Allosterically activated by ADP, AMP, or fructose 2,6-bisphosphate, and allosterically inhibited by ATP or citrate. In terms of biological role, catalyzes the phosphorylation of D-fructose 6-phosphate to fructose 1,6-bisphosphate by ATP, the first committing step of glycolysis. The polypeptide is ATP-dependent 6-phosphofructokinase, muscle type (PFKM) (Homo sapiens (Human)).